We begin with the raw amino-acid sequence, 383 residues long: Prokineticin receptor 2 (383 aa).

Over 1-54 the chain is Extracellular; that stretch reads MGDQNGNTSFAPDLNPPQDHVSLLPLNYSYGDYDIPLDDDEDVTKTQTFFAAKI. N-linked (GlcNAc...) asparagine glycans are attached at residues Asn7 and Asn27. The helical transmembrane segment at 55 to 75 threads the bilayer; it reads VIGVALAGIMLVCGVGNFVFI. Residues 76–89 lie on the Cytoplasmic side of the membrane; sequence AALARYKKLRNLTN. The helical transmembrane segment at 90–110 threads the bilayer; it reads LLIANLAISDFLVAIVCCPFE. The Extracellular segment spans residues 111-136; sequence MDYYVVRQLSWEHGHVLCASVNYLRT. A disulfide bridge connects residues Cys128 and Cys207. Residues 137 to 157 traverse the membrane as a helical segment; sequence VSLYVSTNALLAIAIDRYLAI. Over 158–170 the chain is Cytoplasmic; sequence VHPLKRMNYQTAS. The helical transmembrane segment at 171-191 threads the bilayer; that stretch reads FLIALVWMVSILIAIPSAYFT. The Extracellular portion of the chain corresponds to 192-222; the sequence is TETILVIVKNQEKLFCGQIWPVDQQLYYKSY. The helical transmembrane segment at 223–243 threads the bilayer; the sequence is FLFVFGLEFVGPVVTMTLCYA. Residues 244-272 are Cytoplasmic-facing; that stretch reads RISQELWFKAVPGFQTEQIRKRLRCRRKT. Residues 273 to 293 form a helical membrane-spanning segment; that stretch reads VLLLMGILTAYVLCWAPFYGF. The Extracellular segment spans residues 294–312; sequence TIVRDFFPTLVVKEKHYLT. The chain crosses the membrane as a helical span at residues 313-333; it reads AFYVVECIAMSNSMINTICFV. Residues 334–383 are Cytoplasmic-facing; the sequence is TVKNNTMKYFKKMLLLHWRPSHYGSKSSADLDLKTSGVPATEEVDCIRLK.

Belongs to the G-protein coupled receptor 1 family. As to quaternary structure, homodimer. In terms of tissue distribution, abundantly expressed in the CNS and reproductive organs with the highest levels in the cerebrum, cerebellum, testis and ovary.

The protein resides in the cell membrane. Functionally, receptor for prokineticin 2. Exclusively coupled to the G(q) subclass of heteromeric G proteins. Activation leads to mobilization of calcium, stimulation of phosphoinositide turnover and activation of p44/p42 mitogen-activated protein kinase. The polypeptide is Prokineticin receptor 2 (Prokr2) (Rattus norvegicus (Rat)).